Consider the following 133-residue polypeptide: uncharacterized protein (133 aa).

Residues 1–130 (MPNIVEIAVS…GIIHVIDNVI (130 aa)) enclose the FAS1 domain.

This is an uncharacterized protein from Synechocystis sp. (strain ATCC 27184 / PCC 6803 / Kazusa).